The sequence spans 152 residues: Small ribosomal subunit protein uS13 (152 aa).

This sequence belongs to the universal ribosomal protein uS13 family.

Its subcellular location is the cytoplasm. Located at the top of the head of the 40S subunit, it contacts several helices of the 18S rRNA. In Branchiostoma belcheri (Amphioxus), this protein is Small ribosomal subunit protein uS13 (RPS18).